The chain runs to 112 residues: Putative pterin-4-alpha-carbinolamine dehydratase (112 aa).

The protein belongs to the pterin-4-alpha-carbinolamine dehydratase family.

It catalyses the reaction (4aS,6R)-4a-hydroxy-L-erythro-5,6,7,8-tetrahydrobiopterin = (6R)-L-erythro-6,7-dihydrobiopterin + H2O. The sequence is that of Putative pterin-4-alpha-carbinolamine dehydratase from Shewanella frigidimarina (strain NCIMB 400).